The chain runs to 274 residues: Thiamine kinase (274 aa).

Belongs to the thiamine kinase family.

It catalyses the reaction thiamine + ATP = thiamine phosphate + ADP + H(+). Its pathway is cofactor biosynthesis; thiamine diphosphate biosynthesis; thiamine phosphate from thiamine: step 1/1. Functionally, catalyzes the ATP-dependent phosphorylation of thiamine to thiamine phosphate. Is involved in thiamine salvage. The sequence is that of Thiamine kinase from Salmonella gallinarum (strain 287/91 / NCTC 13346).